The chain runs to 232 residues: Phosphatidylserine decarboxylase proenzyme (232 aa).

Serine 190 functions as the Schiff-base intermediate with substrate; via pyruvic acid in the catalytic mechanism. Serine 190 carries the pyruvic acid (Ser); by autocatalysis modification.

This sequence belongs to the phosphatidylserine decarboxylase family. PSD-A subfamily. Heterodimer of a large membrane-associated beta subunit and a small pyruvoyl-containing alpha subunit. Requires pyruvate as cofactor. Is synthesized initially as an inactive proenzyme. Formation of the active enzyme involves a self-maturation process in which the active site pyruvoyl group is generated from an internal serine residue via an autocatalytic post-translational modification. Two non-identical subunits are generated from the proenzyme in this reaction, and the pyruvate is formed at the N-terminus of the alpha chain, which is derived from the carboxyl end of the proenzyme. The post-translation cleavage follows an unusual pathway, termed non-hydrolytic serinolysis, in which the side chain hydroxyl group of the serine supplies its oxygen atom to form the C-terminus of the beta chain, while the remainder of the serine residue undergoes an oxidative deamination to produce ammonia and the pyruvoyl prosthetic group on the alpha chain.

It is found in the cell membrane. The catalysed reaction is a 1,2-diacyl-sn-glycero-3-phospho-L-serine + H(+) = a 1,2-diacyl-sn-glycero-3-phosphoethanolamine + CO2. The protein operates within phospholipid metabolism; phosphatidylethanolamine biosynthesis; phosphatidylethanolamine from CDP-diacylglycerol: step 2/2. Functionally, catalyzes the formation of phosphatidylethanolamine (PtdEtn) from phosphatidylserine (PtdSer). The chain is Phosphatidylserine decarboxylase proenzyme from Rhodopseudomonas palustris (strain BisA53).